The primary structure comprises 711 residues: Polyribonucleotide nucleotidyltransferase (711 aa).

Positions 486 and 492 each coordinate Mg(2+). The KH domain occupies 553 to 612 (PRIHTIKINPDKIKDVIGKGGSVIRALTEETGTTIEIEDDGTVKIAATDGEKAKHAIRRI). The 69-residue stretch at 622 to 690 (GRIYNGKVTR…RQGRVRLSIK (69 aa)) folds into the S1 motif domain. Residues 690–711 (KEATEQSQPAAAPEAPAAEQGE) are disordered. The segment covering 694–711 (EQSQPAAAPEAPAAEQGE) has biased composition (low complexity).

Belongs to the polyribonucleotide nucleotidyltransferase family. Component of the RNA degradosome, which is a multiprotein complex involved in RNA processing and mRNA degradation. The cofactor is Mg(2+).

It is found in the cytoplasm. The enzyme catalyses RNA(n+1) + phosphate = RNA(n) + a ribonucleoside 5'-diphosphate. Involved in mRNA degradation. Catalyzes the phosphorolysis of single-stranded polyribonucleotides processively in the 3'- to 5'-direction. This is Polyribonucleotide nucleotidyltransferase from Citrobacter koseri (strain ATCC BAA-895 / CDC 4225-83 / SGSC4696).